Here is a 164-residue protein sequence, read N- to C-terminus: Class I hydrophobin rodA (164 aa).

The first 18 residues, 1–18, serve as a signal peptide directing secretion; sequence MRFSISALVLGLAATVYA. Asn50 is a glycosylation site (N-linked (GlcNAc...) asparagine). Intrachain disulfides connect Cys60–Cys138, Cys68–Cys132, Cys69–Cys109, and Cys139–Cys157.

This sequence belongs to the fungal hydrophobin family. In terms of assembly, self-assembles to form functional amyloid fibrils called rodlets. Self-assembly into fibrillar rodlets occurs spontaneously at hydrophobic:hydrophilic interfaces and the rodlets further associate laterally to form amphipathic monolayers.

It localises to the secreted. The protein localises to the cell wall. Functionally, aerial growth, conidiation, and dispersal of filamentous fungi in the environment rely upon a capability of their secreting small amphipathic proteins called hydrophobins (HPBs) with low sequence identity. Class I can self-assemble into an outermost layer of rodlet bundles on aerial cell surfaces, conferring cellular hydrophobicity that supports fungal growth, development and dispersal; whereas Class II form highly ordered films at water-air interfaces through intermolecular interactions but contribute nothing to the rodlet structure. RodA is a class I hydrophobin involved in the cell surface hydrophobicity and conidiation under aerial conditions. The surface rodlet layer of the conidial cell wall makes airborne conidia of filamentous fungi inert to both innate and adaptive immunity. The chain is Class I hydrophobin rodA from Penicillium camembertii.